The chain runs to 573 residues: ESX-1 secretion system protein EccA1 (573 aa).

334 to 341 (GPPGTGKT) lines the ATP pocket.

It belongs to the CbxX/CfxQ family. In terms of assembly, part of the ESX-1 / type VII secretion system (T7SS), which is composed of cytosolic and membrane components.

It localises to the cytoplasm. Its function is as follows. Part of the ESX-1 / type VII specialized secretion system (T7SS), which exports several proteins including EsxA and EsxB. EccA1 exhibits ATPase activity and may provide energy for the export of ESX-1 substrates. This Mycobacterium leprae (strain TN) protein is ESX-1 secretion system protein EccA1.